Here is a 389-residue protein sequence, read N- to C-terminus: Gastricsin (389 aa).

The first 16 residues, 1 to 16 (MKWMVVVLLCLQLLEA), serve as a signal peptide directing secretion. Residues 17–59 (KVVKVPLKKLKSLRETMKEKGLLEEFLKNHKYDPAQKYRYTDF) constitute a propeptide, activation peptide. Residues 73–386 (YFGEISIGTP…DMGNNRVGFA (314 aa)) enclose the Peptidase A1 domain. Aspartate 91 is an active-site residue. Intrachain disulfides connect cysteine 104–cysteine 109 and cysteine 268–cysteine 272. Aspartate 277 is a catalytic residue. Cysteine 311 and cysteine 344 are joined by a disulfide.

It belongs to the peptidase A1 family.

It is found in the secreted. It carries out the reaction More restricted specificity than pepsin A, but shows preferential cleavage at Tyr-|-Xaa bonds. High activity on hemoglobin.. In terms of biological role, hydrolyzes a variety of proteins. This chain is Gastricsin (PGC), found in Rhinolophus ferrumequinum (Greater horseshoe bat).